Consider the following 176-residue polypeptide: Inorganic pyrophosphatase (176 aa).

Residues lysine 30, arginine 44, and tyrosine 56 each coordinate substrate. Mg(2+) is bound by residues aspartate 66, aspartate 71, and aspartate 103. Substrate is bound at residue tyrosine 142.

The protein belongs to the PPase family. As to quaternary structure, homohexamer. Requires Mg(2+) as cofactor.

Its subcellular location is the cytoplasm. It carries out the reaction diphosphate + H2O = 2 phosphate + H(+). Catalyzes the hydrolysis of inorganic pyrophosphate (PPi) forming two phosphate ions. In Aeropyrum pernix (strain ATCC 700893 / DSM 11879 / JCM 9820 / NBRC 100138 / K1), this protein is Inorganic pyrophosphatase.